The primary structure comprises 244 residues: 2-C-methyl-D-erythritol 4-phosphate cytidylyltransferase (244 aa).

It belongs to the IspD/TarI cytidylyltransferase family. IspD subfamily.

The catalysed reaction is 2-C-methyl-D-erythritol 4-phosphate + CTP + H(+) = 4-CDP-2-C-methyl-D-erythritol + diphosphate. Its pathway is isoprenoid biosynthesis; isopentenyl diphosphate biosynthesis via DXP pathway; isopentenyl diphosphate from 1-deoxy-D-xylulose 5-phosphate: step 2/6. Catalyzes the formation of 4-diphosphocytidyl-2-C-methyl-D-erythritol from CTP and 2-C-methyl-D-erythritol 4-phosphate (MEP). This is 2-C-methyl-D-erythritol 4-phosphate cytidylyltransferase from Prosthecochloris aestuarii (strain DSM 271 / SK 413).